The sequence spans 703 residues: Protein CNGC15c (703 aa).

Basic and acidic residues predominate over residues Met1–Arg10. A disordered region spans residues Met1 to Thr23. 5 helical membrane-spanning segments follow: residues Ile91–Val111, Gly179–Ile199, Phe216–Ile236, Leu255–Glu275, and Phe372–Leu392. Leu480–Ile565 contacts a nucleoside 3',5'-cyclic phosphate. The IQ domain maps to Arg616–Asn644. The segment at Lys676–Glu703 is disordered. A compositionally biased stretch (polar residues) spans His681 to Lys694.

The protein belongs to the cyclic nucleotide-gated cation channel (TC 1.A.1.5) family. As to quaternary structure, interacts (via N-terminus) with DMI1 (via c-terminus). The Nod factor has no effect on this interaction, implying that the complex is maintained after activation. Expressed in roots, stems, leaves, flowers and pods.

The protein resides in the nucleus membrane. Its function is as follows. Cyclic nucleotide-gated channel involved in the establishment of both rhizobial and mycorrhizal associations. Required for full activation of nuclear-localized Ca(2+) oscillations by Nod and Myc factors. Simultaneous activation of the K(+)-permeable channel DMI1 and the Ca(2+) channel CNGC15 can give rise to sustained Ca(2+) oscillations. May function during fertilization in both female and male gametophytic Ca(2+) signaling. The polypeptide is Protein CNGC15c (Medicago truncatula (Barrel medic)).